A 574-amino-acid chain; its full sequence is Eukaryotic translation initiation factor 3 subunit D (574 aa).

Residues 153–178 (QRRGGNARQGQRGQGGRFGGDRPKER) form a disordered region. Low complexity predominate over residues 154–163 (RRGGNARQGQ). The tract at residues 312 to 326 (PVETLTVSETSAEPP) is RNA gate. The segment at 555 to 574 (EGTFDSERESSEEENSDDDQ) is disordered. Residues 564 to 574 (SSEEENSDDDQ) are compositionally biased toward acidic residues.

This sequence belongs to the eIF-3 subunit D family. As to quaternary structure, component of the eukaryotic translation initiation factor 3 (eIF-3) complex.

The protein localises to the cytoplasm. In terms of biological role, mRNA cap-binding component of the eukaryotic translation initiation factor 3 (eIF-3) complex, which is involved in protein synthesis of a specialized repertoire of mRNAs and, together with other initiation factors, stimulates binding of mRNA and methionyl-tRNAi to the 40S ribosome. The eIF-3 complex specifically targets and initiates translation of a subset of mRNAs involved in cell proliferation. In the eIF-3 complex, eif3d specifically recognizes and binds the 7-methylguanosine cap of a subset of mRNAs. This is Eukaryotic translation initiation factor 3 subunit D from Caenorhabditis briggsae.